A 454-amino-acid chain; its full sequence is tRNA modification GTPase MnmE (454 aa).

(6S)-5-formyl-5,6,7,8-tetrahydrofolate-binding residues include Arg-23, Glu-80, and Lys-120. In terms of domain architecture, TrmE-type G spans 216–377 (GMKVVIAGRP…LRDHLKQSMG (162 aa)). Residue Asn-226 coordinates K(+). Residues 226–231 (NAGKSS), 245–251 (TDIAGTT), 270–273 (DTAG), 335–338 (NKAD), and 358–360 (SAR) contribute to the GTP site. Ser-230 is a Mg(2+) binding site. Residues Thr-245, Ile-247, and Thr-250 each contribute to the K(+) site. Thr-251 serves as a coordination point for Mg(2+). Lys-454 lines the (6S)-5-formyl-5,6,7,8-tetrahydrofolate pocket.

The protein belongs to the TRAFAC class TrmE-Era-EngA-EngB-Septin-like GTPase superfamily. TrmE GTPase family. As to quaternary structure, homodimer. Heterotetramer of two MnmE and two MnmG subunits. K(+) is required as a cofactor.

The protein resides in the cytoplasm. Its function is as follows. Exhibits a very high intrinsic GTPase hydrolysis rate. Involved in the addition of a carboxymethylaminomethyl (cmnm) group at the wobble position (U34) of certain tRNAs, forming tRNA-cmnm(5)s(2)U34. The protein is tRNA modification GTPase MnmE of Yersinia pseudotuberculosis serotype O:1b (strain IP 31758).